A 329-amino-acid chain; its full sequence is BTB/POZ domain-containing protein At1g55760 (329 aa).

The BTB domain maps to threonine 164–phenylalanine 231.

It participates in protein modification; protein ubiquitination. Functionally, may act as a substrate-specific adapter of an E3 ubiquitin-protein ligase complex (CUL3-RBX1-BTB) which mediates the ubiquitination and subsequent proteasomal degradation of target proteins. The chain is BTB/POZ domain-containing protein At1g55760 from Arabidopsis thaliana (Mouse-ear cress).